The sequence spans 267 residues: Kafirin PSK8 (267 aa).

Residues 1–19 (TKIFALLALHALLVSGTTA) form the signal peptide.

Belongs to the zein family.

In terms of biological role, major seed storage prolamin. In Sorghum bicolor (Sorghum), this protein is Kafirin PSK8.